The primary structure comprises 268 residues: Tryptophan synthase alpha chain (268 aa).

Active-site proton acceptor residues include glutamate 49 and aspartate 60.

It belongs to the TrpA family. In terms of assembly, tetramer of two alpha and two beta chains.

The catalysed reaction is (1S,2R)-1-C-(indol-3-yl)glycerol 3-phosphate + L-serine = D-glyceraldehyde 3-phosphate + L-tryptophan + H2O. The protein operates within amino-acid biosynthesis; L-tryptophan biosynthesis; L-tryptophan from chorismate: step 5/5. In terms of biological role, the alpha subunit is responsible for the aldol cleavage of indoleglycerol phosphate to indole and glyceraldehyde 3-phosphate. In Shigella sonnei (strain Ss046), this protein is Tryptophan synthase alpha chain.